Here is a 102-residue protein sequence, read N- to C-terminus: Small ribosomal subunit protein uS10 (102 aa).

This sequence belongs to the universal ribosomal protein uS10 family. Part of the 30S ribosomal subunit.

Functionally, involved in the binding of tRNA to the ribosomes. This is Small ribosomal subunit protein uS10 from Mesorhizobium japonicum (strain LMG 29417 / CECT 9101 / MAFF 303099) (Mesorhizobium loti (strain MAFF 303099)).